Reading from the N-terminus, the 538-residue chain is Lipid scramblase CLPTM1L (538 aa).

The Cytoplasmic segment spans residues 1–10 (MWSGRSSFTS). The chain crosses the membrane as a helical span at residues 11-31 (LVVGVFVVYVVHTCWVMYGIV). The Extracellular portion of the chain corresponds to 32–284 (YTRPCSGHGR…VKGIFVDTNL (253 aa)). Residues asparagine 91 and asparagine 101 are each glycosylated (N-linked (GlcNAc...) asparagine). Residues 285–305 (YFLALTFFVAAFHLLFDFLAF) form a helical membrane-spanning segment. Topologically, residues 306–324 (KNDISFWKKKKSMIGMSTK) are cytoplasmic. A helical membrane pass occupies residues 325-341 (AVLWRCFSTVVIFLFLL). The Extracellular portion of the chain corresponds to 342-402 (DEQTSLPVLV…TEEYDAQAMK (61 aa)). A helical transmembrane segment spans residues 403–423 (YLSYLLYPLCIGGAIYSLLNI). The Cytoplasmic segment spans residues 424 to 428 (KYKSW). The helical transmembrane segment at 429–449 (YSWLINSFVNGVYAFGFLFML) threads the bilayer. Topologically, residues 450-538 (PQLFVNYKMK…DTPQRKPHTD (89 aa)) are extracellular.

It belongs to the CLPTM1 family.

The protein resides in the endoplasmic reticulum membrane. The enzyme catalyses a 6-(alpha-D-glucosaminyl)-1-(1,2-diacyl-sn-glycero-3-phospho)-1D-myo-inositol(in) = a 6-(alpha-D-glucosaminyl)-1-(1,2-diacyl-sn-glycero-3-phospho)-1D-myo-inositol(out). It carries out the reaction 6-(alpha-D-glucosaminyl)-(1-octadecanoyl,2-(9Z)-octadecenoyl-sn-glycero-3-phospho)-1D-myo-inositol(in) = 6-(alpha-D-glucosaminyl)-(1-octadecanoyl,2-(9Z)-octadecenoyl-sn-glycero-3-phospho)-1D-myo-inositol(out). It catalyses the reaction a 1,2-diacyl-sn-glycero-3-phospho-(1D-myo-inositol)(in) = a 1,2-diacyl-sn-glycero-3-phospho-(1D-myo-inositol)(out). The catalysed reaction is a 1,2-diacyl-sn-glycero-3-phosphocholine(in) = a 1,2-diacyl-sn-glycero-3-phosphocholine(out). The enzyme catalyses a 1,2-diacyl-sn-glycero-3-phosphoethanolamine(in) = a 1,2-diacyl-sn-glycero-3-phosphoethanolamine(out). Functionally, scramblase that mediates the translocation of glucosaminylphosphatidylinositol (alpha-D-GlcN-(1-6)-(1,2-diacyl-sn-glycero-3-phospho)-1D-myo-inositol, GlcN-PI) across the endoplasmic reticulum (ER) membrane, from the cytosolic leaflet to the luminal leaflet of the ER membrane, where it participates in the biosynthesis of glycosylphosphatidylinositol (GPI). GPI is a lipid glycoconjugate involved in post-translational modification of proteins. Can also translocate 1,2-diacyl-sn-glycero-3-phospho-(1D-myo-inositol) (phosphatidylinositol or PI), as well as several other phospholipids (1,2-diacyl-sn-glycero-3-phosphocholine, 1,2-diacyl-sn-glycero-3-phosphoethanolamine), and N-acetylglucosaminylphosphatidylinositol (GlcNAc-PI) in vitro. The sequence is that of Lipid scramblase CLPTM1L (CLPTM1L) from Bos taurus (Bovine).